The primary structure comprises 688 residues: Complement C1s subcomponent (688 aa).

The N-terminal stretch at 1-15 (MWCFVFFSLLASFSA) is a signal peptide. Residues 16 to 130 (EPTMYGEILS…TGFAAYYSAV (115 aa)) form the CUB 1 domain. Positions 60, 68, 113, 131, 132, and 134 each coordinate Ca(2+). Residues cysteine 65 and cysteine 83 are joined by a disulfide bond. In terms of domain architecture, EGF-like; calcium-binding spans 131–172 (DVNECTDFTDVPCSHFCNNFIGGYFCSCPPEYFLHDDMRTCG). 3 disulfides stabilise this stretch: cysteine 135/cysteine 147, cysteine 143/cysteine 156, and cysteine 158/cysteine 171. Residues asparagine 149, phenylalanine 150, and glycine 153 each coordinate Ca(2+). Asparagine 149 carries the (3R)-3-hydroxyasparagine modification. N-linked (GlcNAc...) asparagine glycosylation is present at asparagine 174. The cysteines at positions 175 and 202 are disulfide-linked. Residues 175–290 (CSGDVFTALI…KGWKLRYHGD (116 aa)) enclose the CUB 2 domain. Positions 226, 236, 275, 278, and 279 each coordinate Ca(2+). A disulfide bond links cysteine 234 and cysteine 251. 2 Sushi domains span residues 292–356 (IPCP…ECQP) and 357–423 (VDCG…KCIP). 7 cysteine pairs are disulfide-bonded: cysteine 294/cysteine 341, cysteine 321/cysteine 354, cysteine 359/cysteine 403, cysteine 386/cysteine 421, cysteine 425/cysteine 549, cysteine 595/cysteine 618, and cysteine 627/cysteine 659. The N-linked (GlcNAc...) asparagine glycan is linked to asparagine 406. One can recognise a Peptidase S1 domain in the interval 438 to 680 (IFGGYSTKIQ…YVDWILKTMQ (243 aa)). Active-site charge relay system residues include histidine 475 and aspartate 529. Residue serine 631 is the Charge relay system of the active site.

The protein belongs to the peptidase S1 family. Core component of the complement C1 complex, a calcium-dependent complex composed of 1 molecule of the C1Q subcomplex, 2 molecules of C1R and 2 molecules of C1S. The C1Q subcomplex is composed 18 subunits: 3 chains of C1QA, C1QB, and C1QC trimerize to form 6 collagen-like triple helices connected to six globular ligand-recognition modules. In terms of processing, cleaved and activated by C1R to generate Complement C1s subcomponent heavy and light chains. The iron and 2-oxoglutarate dependent 3-hydroxylation of aspartate and asparagine is (R) stereospecific within EGF domains.

It localises to the secreted. The protein resides in the cell surface. It carries out the reaction Cleavage of Arg-|-Ala bond in complement component C4 to form C4a and C4b, and Lys(or Arg)-|-Lys bond in complement component C2 to form C2a and C2b: the 'classical' pathway C3 convertase.. Its activity is regulated as follows. Cleaved and activated by C1R. Immunoglobulin-binding promotes autoactivation of C1R, which results in the cleavage of the Arg-Ile bond in the catalytic domain. Inhibited by C1 inhibitor (SERPING1). Functionally, component of the complement C1 complex, a multiprotein complex that initiates the classical pathway of the complement system, a cascade of proteins that leads to phagocytosis and breakdown of pathogens and signaling that strengthens the adaptive immune system. C1S is activated following association of the C1 complex with immunoglobulins (IgG or IgM) complexed with antigens to form antigen-antibody complexes on the surface of pathogens. C1S is cleaved and activated by C1R to generate C1s subcomponent heavy and light chains. C1s subcomponent light chain then cleaves and activates C2 and C4, the next components of the classical complement pathway. In terms of biological role, serine protease component of the complement C1 complex, which catalyzes cleavage and activation of C2 and C4, the next components of the classical complement pathway. Also cleaves IGFBP5 and thereby inhibits the trophic effects of IGF1. In Rattus norvegicus (Rat), this protein is Complement C1s subcomponent.